A 201-amino-acid chain; its full sequence is Adenylyl-sulfate kinase (201 aa).

Residue Gly35–Ser42 participates in ATP binding. Ser109 functions as the Phosphoserine intermediate in the catalytic mechanism.

Belongs to the APS kinase family.

It catalyses the reaction adenosine 5'-phosphosulfate + ATP = 3'-phosphoadenylyl sulfate + ADP + H(+). It participates in sulfur metabolism; hydrogen sulfide biosynthesis; sulfite from sulfate: step 2/3. Catalyzes the synthesis of activated sulfate. This Erwinia tasmaniensis (strain DSM 17950 / CFBP 7177 / CIP 109463 / NCPPB 4357 / Et1/99) protein is Adenylyl-sulfate kinase.